A 69-amino-acid polypeptide reads, in one-letter code: Putative transmembrane protein ORF34 (69 aa).

2 consecutive transmembrane segments (helical) span residues 7-27 and 42-62; these read LLSVLAIIFYGVMVVGSMMQF and VSLMLVGICAVVCFYASIVYF.

The protein localises to the host membrane. The polypeptide is Putative transmembrane protein ORF34 (Haloarcula hispanica (His1V)).